An 880-amino-acid chain; its full sequence is Alanine--tRNA ligase (880 aa).

Zn(2+) is bound by residues histidine 568, histidine 572, cysteine 670, and histidine 674.

Belongs to the class-II aminoacyl-tRNA synthetase family. It depends on Zn(2+) as a cofactor.

The protein localises to the cytoplasm. It catalyses the reaction tRNA(Ala) + L-alanine + ATP = L-alanyl-tRNA(Ala) + AMP + diphosphate. Its function is as follows. Catalyzes the attachment of alanine to tRNA(Ala) in a two-step reaction: alanine is first activated by ATP to form Ala-AMP and then transferred to the acceptor end of tRNA(Ala). Also edits incorrectly charged Ser-tRNA(Ala) and Gly-tRNA(Ala) via its editing domain. The polypeptide is Alanine--tRNA ligase (Enterococcus faecalis (strain ATCC 700802 / V583)).